The primary structure comprises 352 residues: Phosphatase Herzog (352 aa).

Residues 1–102 form a prion-like domain necessary for both protein assembly and membrane targeting region; that stretch reads MDATSIITQV…PLPDQQRYLL (102 aa). The interval 103–267 is mediates substrate recognition; that stretch reads PQVRLTDMHR…ELIPLFEKLS (165 aa). Positions 108–266 constitute an FCP1 homology domain; that stretch reads TDMHRKCMVI…RELIPLFEKL (159 aa). Disordered stretches follow at residues 284–310 and 332–352; these read NNQTNQQQHPQELQQAPNQLHQQLQQQ and TMLNQQQTSPPSPQSELLQKT.

As to quaternary structure, monomer. Forms higher-order protein aggregates with amyloid-like features during gastrulation. Interacts with babo, dah, Irk1, pch2, Ras64B, sax and Src64B.

It is found in the cell membrane. It carries out the reaction O-phospho-L-seryl-[protein] + H2O = L-seryl-[protein] + phosphate. With respect to regulation, phosphatase activity requires amyloid-like aggregation on the membrane. Its function is as follows. Prion-like membrane-associated phosphatase. Phosphatase activity depends on amyloid-like assembly at the membrane. Might have a role in establishment of segment polarity in embryos. The protein is Phosphatase Herzog of Drosophila melanogaster (Fruit fly).